The following is a 316-amino-acid chain: MSIKEQTLMTPYLQFDRNQWAALRDSVPMTLSEDEIARLKGINEDLSLEEVAEIYLPLSRLLNFYISSNLRRQAVLEQFLGTNGQRIPYIISIAGSVAVGKSTTARVLQALLSRWPEHRRVELITTDGFLHPNQVLKERGLMKKKGFPESYDMHRLVKFVSDLKSGVPNVTAPVYSHLIYDVIPDGDKTVVQPDILILEGLNVLQSGMDYPHDPHHVFVSDFVDFSIYVDAPEDLLQTWYINRFLKFREGAFTDPDSYFHNYAKLTKEEAIKTAMTLWKEINWLNLKQNILPTRERASLILTKSANHAVEEVRLRK.

An ATP-binding site is contributed by 95–102; that stretch reads GSVAVGKS.

The protein belongs to the prokaryotic pantothenate kinase family.

The protein resides in the cytoplasm. It carries out the reaction (R)-pantothenate + ATP = (R)-4'-phosphopantothenate + ADP + H(+). It functions in the pathway cofactor biosynthesis; coenzyme A biosynthesis; CoA from (R)-pantothenate: step 1/5. In Shigella sonnei (strain Ss046), this protein is Pantothenate kinase.